Consider the following 119-residue polypeptide: MMLEFAPIFIYLVISLLVSLILLGVPFLFASNSSTYPEKLSAYECGFDPFGDARSRFDIRFYLVSILFLIFDLEVTFFFPWAVSLNKIDLFGFWSMMAFLFILTIGFLYEWKRGALDWE.

Helical transmembrane passes span 8–28 (IFIY…VPFL), 63–83 (LVSI…PWAV), and 88–108 (IDLF…IGFL).

Belongs to the complex I subunit 3 family.

The protein resides in the mitochondrion membrane. It catalyses the reaction a ubiquinone + NADH + 5 H(+)(in) = a ubiquinol + NAD(+) + 4 H(+)(out). Its function is as follows. Core subunit of the mitochondrial membrane respiratory chain NADH dehydrogenase (Complex I) that is believed to belong to the minimal assembly required for catalysis. Complex I functions in the transfer of electrons from NADH to the respiratory chain. The immediate electron acceptor for the enzyme is believed to be ubiquinone. The sequence is that of NADH-ubiquinone oxidoreductase chain 3 (ND3) from Brassica napus (Rape).